A 351-amino-acid chain; its full sequence is S-adenosylmethionine:tRNA ribosyltransferase-isomerase (351 aa).

It belongs to the QueA family. Monomer.

The protein resides in the cytoplasm. It catalyses the reaction 7-aminomethyl-7-carbaguanosine(34) in tRNA + S-adenosyl-L-methionine = epoxyqueuosine(34) in tRNA + adenine + L-methionine + 2 H(+). It participates in tRNA modification; tRNA-queuosine biosynthesis. Transfers and isomerizes the ribose moiety from AdoMet to the 7-aminomethyl group of 7-deazaguanine (preQ1-tRNA) to give epoxyqueuosine (oQ-tRNA). This is S-adenosylmethionine:tRNA ribosyltransferase-isomerase from Phocaeicola vulgatus (strain ATCC 8482 / DSM 1447 / JCM 5826 / CCUG 4940 / NBRC 14291 / NCTC 11154) (Bacteroides vulgatus).